Here is a 153-residue protein sequence, read N- to C-terminus: MTRKKRRLYFVVLGMLALFAAAGLTLTAFQDNLVFFYSPTDLQEKGVDQGRRFRVGGLVEEGSVVRDGETVRFIVTDLMNTVTVRYTGMLPDLFREGQGVVAEGAMDGAGTFVAASVLAKHDENYMPPEVAESLKASGKWQHGPPTAAAAPAP.

The Cytoplasmic segment spans residues 1 to 7; sequence MTRKKRR. The chain crosses the membrane as a helical; Signal-anchor for type II membrane protein span at residues 8-28; sequence LYFVVLGMLALFAAAGLTLTA. At 29–153 the chain is on the periplasmic side; the sequence is FQDNLVFFYS…PPTAAAAPAP (125 aa). Positions 121 and 125 each coordinate heme. The interval 132-153 is disordered; sequence ESLKASGKWQHGPPTAAAAPAP. A compositionally biased stretch (low complexity) spans 144-153; the sequence is PPTAAAAPAP.

This sequence belongs to the CcmE/CycJ family.

The protein resides in the cell inner membrane. In terms of biological role, heme chaperone required for the biogenesis of c-type cytochromes. Transiently binds heme delivered by CcmC and transfers the heme to apo-cytochromes in a process facilitated by CcmF and CcmH. The polypeptide is Cytochrome c-type biogenesis protein CcmE (Rhodospirillum rubrum (strain ATCC 11170 / ATH 1.1.1 / DSM 467 / LMG 4362 / NCIMB 8255 / S1)).